The sequence spans 150 residues: Large ribosomal subunit protein eL19 (150 aa).

The segment at 59–89 (SRYRARIRHEQKKKGRHRGPGSRKGKKTARM) is disordered. The segment covering 61-89 (YRARIRHEQKKKGRHRGPGSRKGKKTARM) has biased composition (basic residues).

Belongs to the eukaryotic ribosomal protein eL19 family. Part of the 50S ribosomal subunit.

Binds to the 23S rRNA. This chain is Large ribosomal subunit protein eL19, found in Pyrococcus horikoshii (strain ATCC 700860 / DSM 12428 / JCM 9974 / NBRC 100139 / OT-3).